The following is a 343-amino-acid chain: DNA-directed RNA polymerase subunit alpha (343 aa).

The tract at residues 1–236 (MQEHYYKFWR…EQLQIFLTFD (236 aa)) is alpha N-terminal domain (alpha-NTD). Positions 253–343 (LNENLFRSVD…QPPQKRETQQ (91 aa)) are alpha C-terminal domain (alpha-CTD).

The protein belongs to the RNA polymerase alpha chain family. In terms of assembly, homodimer. The RNAP catalytic core consists of 2 alpha, 1 beta, 1 beta' and 1 omega subunit. When a sigma factor is associated with the core the holoenzyme is formed, which can initiate transcription.

It carries out the reaction RNA(n) + a ribonucleoside 5'-triphosphate = RNA(n+1) + diphosphate. In terms of biological role, DNA-dependent RNA polymerase catalyzes the transcription of DNA into RNA using the four ribonucleoside triphosphates as substrates. In Bdellovibrio bacteriovorus (strain ATCC 15356 / DSM 50701 / NCIMB 9529 / HD100), this protein is DNA-directed RNA polymerase subunit alpha.